Here is a 175-residue protein sequence, read N- to C-terminus: uncharacterized protein (175 aa).

The transit peptide at 1 to 11 (METWRKGSFRN) directs the protein to the mitochondrion. Residues 29–48 (QGSILSQASTAGGDHEEYSN) form a disordered region.

The protein resides in the mitochondrion. This is an uncharacterized protein from Mus musculus (Mouse).